The following is a 75-amino-acid chain: uncharacterized protein (75 aa).

This is an uncharacterized protein from Saccharomyces cerevisiae (strain ATCC 204508 / S288c) (Baker's yeast).